A 287-amino-acid polypeptide reads, in one-letter code: ATP synthase gamma chain (287 aa).

The protein belongs to the ATPase gamma chain family. In terms of assembly, F-type ATPases have 2 components, CF(1) - the catalytic core - and CF(0) - the membrane proton channel. CF(1) has five subunits: alpha(3), beta(3), gamma(1), delta(1), epsilon(1). CF(0) has three main subunits: a, b and c.

The protein resides in the cell inner membrane. Produces ATP from ADP in the presence of a proton gradient across the membrane. The gamma chain is believed to be important in regulating ATPase activity and the flow of protons through the CF(0) complex. The protein is ATP synthase gamma chain of Serratia proteamaculans (strain 568).